The primary structure comprises 151 residues: Transcriptional regulator MraZ (151 aa).

SpoVT-AbrB domains follow at residues 5–52 (ATAV…PLDE) and 81–124 (ATEC…SDVE).

The protein belongs to the MraZ family. In terms of assembly, forms oligomers.

It is found in the cytoplasm. The protein resides in the nucleoid. This is Transcriptional regulator MraZ from Haemophilus influenzae (strain 86-028NP).